The chain runs to 510 residues: Beta-glucosidase 34 (510 aa).

A signal peptide spans 1–26 (MGNGGRCMVEVVILLVLMAMSQGCDA). Asn-28 carries an N-linked (GlcNAc...) asparagine glycan. Gln-52 provides a ligand contact to a beta-D-glucoside. Asn-120 carries N-linked (GlcNAc...) asparagine glycosylation. A beta-D-glucoside-binding positions include His-153 and 198-199 (NE). Glu-199 functions as the Proton donor in the catalytic mechanism. An intrachain disulfide couples Cys-218 to Cys-226. Asn-279 and Asn-331 each carry an N-linked (GlcNAc...) asparagine glycan. Tyr-342 contacts a beta-D-glucoside. A glycan (N-linked (GlcNAc...) asparagine) is linked at Asn-360. A beta-D-glucoside contacts are provided by residues Glu-415, Trp-465, 472–473 (EW), and Phe-481. Glu-415 acts as the Nucleophile in catalysis.

It belongs to the glycosyl hydrolase 1 family.

It carries out the reaction Hydrolysis of terminal, non-reducing beta-D-glucosyl residues with release of beta-D-glucose.. This is Beta-glucosidase 34 (BGLU34) from Oryza sativa subsp. japonica (Rice).